Here is a 93-residue protein sequence, read N- to C-terminus: UPF0298 protein LMHCC_0506 (93 aa).

This sequence belongs to the UPF0298 family.

It localises to the cytoplasm. The polypeptide is UPF0298 protein LMHCC_0506 (Listeria monocytogenes serotype 4a (strain HCC23)).